A 236-amino-acid polypeptide reads, in one-letter code: 2-C-methyl-D-erythritol 4-phosphate cytidylyltransferase (236 aa).

This sequence belongs to the IspD/TarI cytidylyltransferase family. IspD subfamily. As to quaternary structure, homodimer.

It catalyses the reaction 2-C-methyl-D-erythritol 4-phosphate + CTP + H(+) = 4-CDP-2-C-methyl-D-erythritol + diphosphate. It functions in the pathway isoprenoid biosynthesis; isopentenyl diphosphate biosynthesis via DXP pathway; isopentenyl diphosphate from 1-deoxy-D-xylulose 5-phosphate: step 2/6. Functionally, catalyzes the formation of 4-diphosphocytidyl-2-C-methyl-D-erythritol from CTP and 2-C-methyl-D-erythritol 4-phosphate (MEP). In Escherichia coli O139:H28 (strain E24377A / ETEC), this protein is 2-C-methyl-D-erythritol 4-phosphate cytidylyltransferase.